A 491-amino-acid polypeptide reads, in one-letter code: F-box protein At3g59000 (491 aa).

Residues 1 to 49 enclose the F-box domain; sequence MDRVGSLPDELLSHILSFLTTKEAALTSLLSKRWRYLIAFVPNLAFDDI.

In terms of assembly, part of a SCF (ASK-cullin-F-box) protein ligase complex. Interacts with ASK4.

It localises to the nucleus. It participates in protein modification; protein ubiquitination. Its function is as follows. Component of SCF(ASK-cullin-F-box) E3 ubiquitin ligase complexes, which may mediate the ubiquitination and subsequent proteasomal degradation of target proteins. The protein is F-box protein At3g59000 of Arabidopsis thaliana (Mouse-ear cress).